A 447-amino-acid chain; its full sequence is RNA-binding protein 208 (447 aa).

2 RRM domains span residues 73-147 (RSVY…WAYA) and 158-236 (FHIF…WATK). Positions 254 to 269 (TNGSSSNPGMEASQDT) are enriched in polar residues. Disordered regions lie at residues 254–279 (TNGSSSNPGMEASQDTGSKENPENNP) and 353–372 (WGNKPTPPGTSSKPLPPPLP). In terms of domain architecture, RRM 3 spans 282–356 (TTVYVGNLGH…KPIKCSWGNK (75 aa)).

Interacts with RBP-P.

Its function is as follows. RNA-binding protein. The sequence is that of RNA-binding protein 208 from Oryza sativa subsp. japonica (Rice).